The following is a 250-amino-acid chain: Ubiquinone/menaquinone biosynthesis C-methyltransferase UbiE (250 aa).

Residues serine 73, aspartate 94, and 122–123 (NA) each bind S-adenosyl-L-methionine.

Belongs to the class I-like SAM-binding methyltransferase superfamily. MenG/UbiE family.

It catalyses the reaction a 2-demethylmenaquinol + S-adenosyl-L-methionine = a menaquinol + S-adenosyl-L-homocysteine + H(+). The enzyme catalyses a 2-methoxy-6-(all-trans-polyprenyl)benzene-1,4-diol + S-adenosyl-L-methionine = a 5-methoxy-2-methyl-3-(all-trans-polyprenyl)benzene-1,4-diol + S-adenosyl-L-homocysteine + H(+). Its pathway is quinol/quinone metabolism; menaquinone biosynthesis; menaquinol from 1,4-dihydroxy-2-naphthoate: step 2/2. It functions in the pathway cofactor biosynthesis; ubiquinone biosynthesis. In terms of biological role, methyltransferase required for the conversion of demethylmenaquinol (DMKH2) to menaquinol (MKH2) and the conversion of 2-polyprenyl-6-methoxy-1,4-benzoquinol (DDMQH2) to 2-polyprenyl-3-methyl-6-methoxy-1,4-benzoquinol (DMQH2). The sequence is that of Ubiquinone/menaquinone biosynthesis C-methyltransferase UbiE from Legionella pneumophila (strain Corby).